The primary structure comprises 67 residues: Large ribosomal subunit protein uL29 (67 aa).

It belongs to the universal ribosomal protein uL29 family.

The chain is Large ribosomal subunit protein uL29 from Gemmatimonas aurantiaca (strain DSM 14586 / JCM 11422 / NBRC 100505 / T-27).